The primary structure comprises 343 residues: UDP-3-O-acylglucosamine N-acyltransferase 2 (343 aa).

His-251 (proton acceptor) is an active-site residue.

It belongs to the transferase hexapeptide repeat family. LpxD subfamily. As to quaternary structure, homotrimer.

It catalyses the reaction a UDP-3-O-[(3R)-3-hydroxyacyl]-alpha-D-glucosamine + a (3R)-hydroxyacyl-[ACP] = a UDP-2-N,3-O-bis[(3R)-3-hydroxyacyl]-alpha-D-glucosamine + holo-[ACP] + H(+). Its pathway is bacterial outer membrane biogenesis; LPS lipid A biosynthesis. Its function is as follows. Catalyzes the N-acylation of UDP-3-O-acylglucosamine using 3-hydroxyacyl-ACP as the acyl donor. Is involved in the biosynthesis of lipid A, a phosphorylated glycolipid that anchors the lipopolysaccharide to the outer membrane of the cell. The chain is UDP-3-O-acylglucosamine N-acyltransferase 2 from Legionella pneumophila subsp. pneumophila (strain Philadelphia 1 / ATCC 33152 / DSM 7513).